A 528-amino-acid polypeptide reads, in one-letter code: GMP synthase [glutamine-hydrolyzing] (528 aa).

The region spanning 22 to 212 (AILVLDFGSQ…VFKICQSQTN (191 aa)) is the Glutamine amidotransferase type-1 domain. Cys-99 (nucleophile) is an active-site residue. Residues His-186 and Glu-188 contribute to the active site. Positions 213–403 (WSLESNVETI…LGIKKEALYR (191 aa)) constitute a GMPS ATP-PPase domain. 240 to 246 (SGGTDSL) contributes to the ATP binding site.

In terms of assembly, homodimer.

It carries out the reaction XMP + L-glutamine + ATP + H2O = GMP + L-glutamate + AMP + diphosphate + 2 H(+). It participates in purine metabolism; GMP biosynthesis; GMP from XMP (L-Gln route): step 1/1. In terms of biological role, catalyzes the synthesis of GMP from XMP. The sequence is that of GMP synthase [glutamine-hydrolyzing] from Borrelia garinii subsp. bavariensis (strain ATCC BAA-2496 / DSM 23469 / PBi) (Borreliella bavariensis).